The chain runs to 229 residues: Transcriptional regulatory protein CreB (229 aa).

Residues 5 to 119 enclose the Response regulatory domain; that stretch reads TVWLVEDEQG…EVCARVRTLL (115 aa). Position 54 is a 4-aspartylphosphate (Asp-54). A DNA-binding region (ompR/PhoB-type) is located at residues 129–228; that stretch reads SPVIRIGHFE…HRGMGYSLRG (100 aa).

In terms of processing, phosphorylated by CreC.

The protein resides in the cytoplasm. In terms of biological role, member of the two-component regulatory system CreC/CreB involved in catabolic regulation. This is Transcriptional regulatory protein CreB (creB) from Escherichia coli (strain K12).